A 1581-amino-acid chain; its full sequence is Rho guanine nucleotide exchange factor 5 (1581 aa).

Disordered stretches follow at residues 25–54, 159–274, 316–643, 659–700, 741–810, and 829–1051; these read EGIM…TDGH, VSKE…EQKQ, LRDS…RDGI, SEEF…PPTV, HSHP…PEFY, and VPII…GSSD. Residues 41–54 show a composition bias toward basic and acidic residues; it reads QEDRDPSYKWTDGH. Residues 204-221 are compositionally biased toward polar residues; it reads KQLQLEATQENQGQEGFL. Acidic residues predominate over residues 228–241; the sequence is GLEEQEGQEVEIQE. 2 stretches are compositionally biased toward basic and acidic residues: residues 326–336 and 345–380; these read QESREVEERRV and RLVE…DSGD. Ser-446 is modified (phosphoserine). Residues 474-492 show a composition bias toward basic and acidic residues; that stretch reads LDNRTHNSQQEEFRLRKGI. Residues 496–507 are compositionally biased toward polar residues; the sequence is SASTSVAPSGTR. The span at 515–531 shows a compositional bias: low complexity; sequence PNVFSSTATLSPVSSSV. 5 stretches are compositionally biased toward polar residues: residues 569-595, 603-613, 662-685, 748-760, and 779-791; these read TSDT…NSFP, TPDSLGMSLSF, FTSN…QNSA, TLSS…SKGS, and TPES…TSIP. Positions 829 to 843 are enriched in pro residues; that stretch reads VPIIDPSSEPPPLPP. 3 stretches are compositionally biased toward polar residues: residues 867 to 881, 889 to 905, and 912 to 925; these read PNNQ…SVGR, GRST…NNEV, and SNMT…SPTT. Phosphoserine is present on residues Ser-953 and Ser-969. Positions 975–986 are enriched in basic and acidic residues; it reads KNSEKPLHHQLE. A phosphoserine mark is found at Ser-1029 and Ser-1110. The region spanning 1158 to 1342 is the DH domain; sequence KLQEAKFELI…EKLIRDCNSN (185 aa). Residues 1375 to 1488 enclose the PH domain; sequence LVKSGELTAL…SALAMPREEL (114 aa). The SH3 domain occupies 1494–1555; it reads YDSPQVQCLR…PVQQVEFISN (62 aa).

In terms of assembly, interacts with SRC. Forms a ternary complex with SRC and the PI3K 85 kDa subunit. Interacts with and is activated by the heterodimer formed by GNB1 and GNG2. Interacts with ODAM (via C-terminus). Interacts with RHOA. Activation of SRC induces tyrosine phosphorylation of ARHGEF5.

Its subcellular location is the nucleus. The protein resides in the cytoplasm. It localises to the cell projection. The protein localises to the podosome. Functionally, guanine nucleotide exchange factor which activates Rho GTPases. Strongly activates RHOA. Also strongly activates RHOB, weakly activates RHOC and RHOG and shows no effect on RHOD, RHOV, RHOQ or RAC1. Involved in regulation of cell shape and actin cytoskeletal organization. Plays a role in actin organization by generating a loss of actin stress fibers and the formation of membrane ruffles and filopodia. Required for SRC-induced podosome formation. Involved in positive regulation of immature dendritic cell migration. This is Rho guanine nucleotide exchange factor 5 from Mus musculus (Mouse).